The primary structure comprises 1141 residues: IgM protease (1141 aa).

Positions 1 to 32 (MNIQERFSLRKSAVGLVSVSLLCAIYTSTVAA) are cleaved as a signal peptide. The active-site Nucleophile is Cys-195. 4 disordered regions span residues 518 to 544 (PDLP…STNL), 725 to 749 (EKDS…NVET), 781 to 805 (LEKD…TNVE), and 839 to 860 (EKDS…ESTS). Residues 526–544 (STVSDVDSLSSQETSSTNL) show a composition bias toward polar residues. Low complexity-rich tracts occupy residues 738-749 (EPTSSESTNVET) and 795-805 (EPTSSESTNVE). A helical membrane pass occupies residues 1119 to 1136 (IMGVGLLTLVLGSALGLL).

It belongs to the peptidase C66 family.

Its subcellular location is the cell membrane. The protein localises to the secreted. With respect to regulation, igM cleavage is inhibited by iodoacetamide but not by AEBSF, bestatin, E-64, Z-LVG-CHN(2), or EDTA. Its function is as follows. Catalyzes the specific cleavage of porcine IgM bound to the bacterial surface. Can degrade only IgM but neither IgG nor IgA, and is host specific, as it exclusively cleaves porcine IgM but not IgM from six other species, including human, mouse and a closely related member of the Suidae family. Promotes survival in porcine blood. Is thus involved in a so-far-unknown mechanism of host-pathogen interaction at an early stage of the host immune response. The chain is IgM protease (ide) from Streptococcus suis (strain P1/7).